Consider the following 1226-residue polypeptide: Methionine synthase (1226 aa).

A Hcy-binding domain is found at 6–326 (RQQLEQQLKQ…EHIAAIAKAV (321 aa)). Positions 248, 311, and 312 each coordinate Zn(2+). A Pterin-binding domain is found at 357-618 (FVNVGERTNV…VPLKLREAVE (262 aa)). The B12-binding N-terminal domain occupies 651-745 (SALEWRAWPV…FINAQKSGST (95 aa)). Methylcob(III)alamin is bound by residues glutamate 695, 757 to 761 (GDVHD), histidine 760, serine 805, threonine 809, and alanine 861. In terms of domain architecture, B12-binding spans 747 to 882 (NGKILLATVK…SDEQRPGFIE (136 aa)). The AdoMet activation domain maps to 898 to 1226 (KTPKSRPVTL…EKWLAPNLDA (329 aa)). Residues aspartate 948, arginine 1136, and 1191–1192 (YF) each bind S-adenosyl-L-methionine.

The protein belongs to the vitamin-B12 dependent methionine synthase family. Methylcob(III)alamin serves as cofactor. Zn(2+) is required as a cofactor.

The catalysed reaction is (6S)-5-methyl-5,6,7,8-tetrahydrofolate + L-homocysteine = (6S)-5,6,7,8-tetrahydrofolate + L-methionine. It functions in the pathway amino-acid biosynthesis; L-methionine biosynthesis via de novo pathway; L-methionine from L-homocysteine (MetH route): step 1/1. In terms of biological role, catalyzes the transfer of a methyl group from methyl-cobalamin to homocysteine, yielding enzyme-bound cob(I)alamin and methionine. Subsequently, remethylates the cofactor using methyltetrahydrofolate. The polypeptide is Methionine synthase (metH) (Vibrio cholerae serotype O1 (strain ATCC 39315 / El Tor Inaba N16961)).